The primary structure comprises 145 residues: Acidic phospholipase A2 homolog textilotoxin C chain (145 aa).

The signal sequence occupies residues 1–19 (MHPAHLLVLLGVYVSLLGA). The propeptide occupies 20 to 27 (ARIPPLPL). Disulfide bonds link Cys-38-Cys-98, Cys-54-Cys-144, Cys-56-Cys-72, Cys-71-Cys-125, Cys-78-Cys-118, Cys-87-Cys-111, and Cys-105-Cys-116.

The protein belongs to the phospholipase A2 family. Group I subfamily. D49 sub-subfamily. Heterohexamer. 2 forms exist: 2 A or 2 B chains, 2 C chains and 2 covalently-linked D chains, and 1 A or 1 B, 1 C, 2 covalently-linked D chains and 2 differentially glycosylated covalently-linked D chains. Textilotoxin was originally described as pentameric. Expressed by the venom gland.

It is found in the secreted. Its function is as follows. Snake venom oligomeric phospholipase A2 that has potent presynaptic neurotoxicity. Chain C is not itself neurotoxic, but it is essential for the neurotoxicity of textilotoxin. Chain C possesses a very low phospholipase activity. This Pseudonaja textilis (Eastern brown snake) protein is Acidic phospholipase A2 homolog textilotoxin C chain.